Consider the following 365-residue polypeptide: Histidinol-phosphate aminotransferase (365 aa).

Lys221 bears the N6-(pyridoxal phosphate)lysine mark.

The protein belongs to the class-II pyridoxal-phosphate-dependent aminotransferase family. Histidinol-phosphate aminotransferase subfamily. Homodimer. Pyridoxal 5'-phosphate serves as cofactor.

The catalysed reaction is L-histidinol phosphate + 2-oxoglutarate = 3-(imidazol-4-yl)-2-oxopropyl phosphate + L-glutamate. It functions in the pathway amino-acid biosynthesis; L-histidine biosynthesis; L-histidine from 5-phospho-alpha-D-ribose 1-diphosphate: step 7/9. In Rhodopseudomonas palustris (strain HaA2), this protein is Histidinol-phosphate aminotransferase.